Here is a 166-residue protein sequence, read N- to C-terminus: uncharacterized protein (166 aa).

A helical transmembrane segment spans residues 34–54; that stretch reads FWGKVLVLTFGIICVVFVIFM. Disordered regions lie at residues 73–93 and 123–166; these read QRTQ…SQQF and TSTP…NDEV.

It is found in the vacuole membrane. This is an uncharacterized protein from Schizosaccharomyces pombe (strain 972 / ATCC 24843) (Fission yeast).